Consider the following 370-residue polypeptide: Serine O-succinyltransferase (370 aa).

In terms of domain architecture, AB hydrolase-1 spans 46–355; that stretch reads AILIVTGLSP…PQGHDAFLVD (310 aa). The tract at residues 52-55 is important for substrate specificity; it reads GLSP. The active-site Nucleophile is S149. Residue R218 participates in substrate binding. Catalysis depends on residues D316 and H349. D350 lines the substrate pocket.

It belongs to the AB hydrolase superfamily. MetX family. Homodimer.

Its subcellular location is the cytoplasm. The catalysed reaction is succinyl-CoA + L-serine = O-succinyl-L-serine + CoA. It catalyses the reaction L-homoserine + succinyl-CoA = O-succinyl-L-homoserine + CoA. The protein operates within amino-acid biosynthesis; L-cysteine biosynthesis; L-cysteine from L-serine: step 1/2. Its function is as follows. Transfers a succinyl group from succinyl-CoA to L-serine, forming succinyl-L-serine. In vitro, also has homoserine succinyl transferase activity. This Stenotrophomonas maltophilia (Pseudomonas maltophilia) protein is Serine O-succinyltransferase.